The sequence spans 316 residues: ATP synthase gamma chain (316 aa).

This sequence belongs to the ATPase gamma chain family. In terms of assembly, F-type ATPases have 2 components, CF(1) - the catalytic core - and CF(0) - the membrane proton channel. CF(1) has five subunits: alpha(3), beta(3), gamma(1), delta(1), epsilon(1). CF(0) has three main subunits: a, b and c.

It is found in the cellular thylakoid membrane. Functionally, produces ATP from ADP in the presence of a proton gradient across the membrane. The gamma chain is believed to be important in regulating ATPase activity and the flow of protons through the CF(0) complex. In Prochlorococcus marinus (strain MIT 9211), this protein is ATP synthase gamma chain.